We begin with the raw amino-acid sequence, 972 residues long: Aminopeptidase Ey (972 aa).

The Cytoplasmic segment spans residues 2 to 10 (AAGFFISKS). The helical; Signal-anchor for type II membrane protein transmembrane segment at 11 to 31 (VGIVGIVLALGAVATIIALSV) threads the bilayer. Topologically, residues 32–972 (VYAQEKNKSS…AWFRAETASS (941 aa)) are extracellular. The interval 33 to 72 (YAQEKNKSSGGSGGSDTTSTTTASTTTTSTTTASTTAAPN) is cytosolic Ser/Thr-rich junction. The disordered stretch occupies residues 37–77 (KNKSSGGSGGSDTTSTTTASTTTTSTTTASTTAAPNNPWNR). Asparagine 38 carries an N-linked (GlcNAc...) asparagine glycan. A compositionally biased stretch (low complexity) spans 47-70 (SDTTSTTTASTTTTSTTTASTTAA). Positions 73-967 (NPWNRWRLPT…KEVVHAWFRA (895 aa)) are metalloprotease. 6 N-linked (GlcNAc...) asparagine glycosylation sites follow: asparagine 110, asparagine 132, asparagine 147, asparagine 206, asparagine 269, and asparagine 296. 355 to 359 (GAMEN) provides a ligand contact to substrate. Residue histidine 391 participates in Zn(2+) binding. The Proton acceptor role is filled by glutamate 392. 2 residues coordinate Zn(2+): histidine 395 and glutamate 414. Residues asparagine 513, asparagine 574, asparagine 584, asparagine 628, asparagine 684, and asparagine 742 are each glycosylated (N-linked (GlcNAc...) asparagine). The cysteines at positions 764 and 771 are disulfide-linked. A glycan (N-linked (GlcNAc...) asparagine) is linked at asparagine 785. A disulfide bond links cysteine 801 and cysteine 837.

Belongs to the peptidase M1 family. Homodimer. Zn(2+) is required as a cofactor. In terms of tissue distribution, detected in the plasma and granule fractions of egg yolk (at protein level).

Its subcellular location is the cell membrane. The catalysed reaction is Differs from other aminopeptidases in broad specificity for amino acids in the P1 position and the ability to hydrolyze peptides of four or five residues that contain Pro in the P1' position.. Its function is as follows. Broad specificity aminopeptidase. Degrades a variety of peptides possessing various N-terminal amino acids including hydrophobic, basic and acidic amino acids. Preferentially hydrolyzes small peptides consisting of 4 or 5 amino acids. Hydrolyzes the N-terminal Xaa-Pro bonds in the chicken brain peptide Leu-Pro-Leu-Arg-PheNH2, the substance P fragment Arg-Pro-Lys-Pro and the bradykinin fragment Arg-Pro-Pro-Gly-Phe. Hydrolyzes the N-formylated peptides fMet-Leu-Phe, fMet-Ala-Gly-Ser-Glu and fMet-Nle-Leu-Phe-Nle-Tyr-Lys, but does not hydrolyze peptides with acetylation or pyroglutamic acid at N-terminus. Does not hydrolyze large peptides such as complete substance P, bradykinin or schistoFLRFamide. The polypeptide is Aminopeptidase Ey (ANPEP) (Gallus gallus (Chicken)).